A 146-amino-acid chain; its full sequence is Transcriptional regulator MraZ (146 aa).

2 SpoVT-AbrB domains span residues 5–47 and 76–119; these read EYYH…TITD and SVQV…AKER.

Belongs to the MraZ family. In terms of assembly, forms oligomers.

It is found in the cytoplasm. Its subcellular location is the nucleoid. In Dictyoglomus turgidum (strain DSM 6724 / Z-1310), this protein is Transcriptional regulator MraZ.